The chain runs to 232 residues: MMDGIRIDVLSVIPGFFDSVLDNGLLAIARKKGYADIVVHNLHDYGLGRYRQVDDSPFGGGAGMVLRPEPVFACVEKLQSERCYDAVIFPTPDARPFLQGDANRLSRMKNLMFLCGHYKALDERVRQSLVTMEYSIGDVVLSGGEIPSLLMMDALLRVVPGVLGDSESALTDSFQTGMLDCAYYTRPPEFRGMKVPEVLLSGHHAKIEQWRQENALERTRRLRPDLLGEDVE.

Gly116 contacts S-adenosyl-L-methionine.

Belongs to the RNA methyltransferase TrmD family. As to quaternary structure, homodimer.

Its subcellular location is the cytoplasm. It carries out the reaction guanosine(37) in tRNA + S-adenosyl-L-methionine = N(1)-methylguanosine(37) in tRNA + S-adenosyl-L-homocysteine + H(+). Its function is as follows. Specifically methylates guanosine-37 in various tRNAs. This chain is tRNA (guanine-N(1)-)-methyltransferase, found in Chlorobium luteolum (strain DSM 273 / BCRC 81028 / 2530) (Pelodictyon luteolum).